Reading from the N-terminus, the 333-residue chain is Ornithine carbamoyltransferase (333 aa).

Residues 56 to 59, Q83, R107, and 134 to 137 contribute to the carbamoyl phosphate site; these read STRT and HPTQ. Residues N167, D231, and 235-236 contribute to the L-ornithine site; that span reads SM. Residues 273–274 and R318 contribute to the carbamoyl phosphate site; that span reads CL.

This sequence belongs to the aspartate/ornithine carbamoyltransferase superfamily. OTCase family.

It localises to the cytoplasm. It catalyses the reaction carbamoyl phosphate + L-ornithine = L-citrulline + phosphate + H(+). It functions in the pathway amino-acid biosynthesis; L-arginine biosynthesis; L-arginine from L-ornithine and carbamoyl phosphate: step 1/3. In terms of biological role, reversibly catalyzes the transfer of the carbamoyl group from carbamoyl phosphate (CP) to the N(epsilon) atom of ornithine (ORN) to produce L-citrulline. In Staphylococcus aureus (strain MSSA476), this protein is Ornithine carbamoyltransferase.